A 496-amino-acid chain; its full sequence is Probable malate:quinone oxidoreductase (496 aa).

It belongs to the MQO family. It depends on FAD as a cofactor.

The enzyme catalyses (S)-malate + a quinone = a quinol + oxaloacetate. It participates in carbohydrate metabolism; tricarboxylic acid cycle; oxaloacetate from (S)-malate (quinone route): step 1/1. In Prochlorococcus marinus (strain NATL2A), this protein is Probable malate:quinone oxidoreductase.